Reading from the N-terminus, the 254-residue chain is UPF0173 protein YddR (254 aa).

It belongs to the UPF0173 family.

The protein is UPF0173 protein YddR (yddR) of Bacillus subtilis (strain 168).